The sequence spans 124 residues: Ribonuclease VapC32 (124 aa).

The 111-residue stretch at Ile-2–Cys-112 folds into the PINc domain. Asp-5 and Asp-86 together coordinate Mg(2+).

Belongs to the PINc/VapC protein family. The cofactor is Mg(2+).

Functionally, toxic component of a type II toxin-antitoxin (TA) system. An RNase. Its toxic effect is neutralized by coexpression with cognate antitoxin VapB32. The protein is Ribonuclease VapC32 of Mycobacterium tuberculosis (strain CDC 1551 / Oshkosh).